Consider the following 248-residue polypeptide: Triosephosphate isomerase (248 aa).

Substrate is bound by residues Asn-10 and Lys-12. His-95 functions as the Electrophile in the catalytic mechanism. Glu-165 acts as the Proton acceptor in catalysis.

Belongs to the triosephosphate isomerase family. As to quaternary structure, homodimer.

It catalyses the reaction D-glyceraldehyde 3-phosphate = dihydroxyacetone phosphate. It participates in carbohydrate biosynthesis; gluconeogenesis. The protein operates within carbohydrate degradation; glycolysis; D-glyceraldehyde 3-phosphate from glycerone phosphate: step 1/1. This Eremothecium gossypii (strain ATCC 10895 / CBS 109.51 / FGSC 9923 / NRRL Y-1056) (Yeast) protein is Triosephosphate isomerase (TPI1).